The chain runs to 781 residues: Molybdenum cofactor sulfurase (781 aa).

Lysine 246 carries the N6-(pyridoxal phosphate)lysine modification. The active site involves cysteine 413. The MOSC domain maps to 619 to 781 (GDAVAQWLSE…MTCGDVVIVE (163 aa)). Position 734 is a phosphoserine (serine 734).

Belongs to the class-V pyridoxal-phosphate-dependent aminotransferase family. MOCOS subfamily. Pyridoxal 5'-phosphate serves as cofactor.

It catalyses the reaction Mo-molybdopterin + L-cysteine + AH2 = thio-Mo-molybdopterin + L-alanine + A + H2O. It participates in cofactor biosynthesis; molybdopterin biosynthesis. In terms of biological role, sulfurates the molybdenum cofactor. Sulfation of molybdenum is essential for xanthine dehydrogenase (XDH) and aldehyde oxidase (ADO) enzymes in which molybdenum cofactor is liganded by 1 oxygen and 1 sulfur atom in active form. The polypeptide is Molybdenum cofactor sulfurase (Drosophila erecta (Fruit fly)).